Consider the following 254-residue polypeptide: 3-oxo-5-alpha-steroid 4-dehydrogenase 2 (254 aa).

The next 4 helical transmembrane spans lie at 8–28, 72–92, 146–166, and 206–226; these read SPVL…LYVA, PLSL…LHYF, FSLG…SDYI, and LATW…FLGL.

The protein belongs to the steroid 5-alpha reductase family. Expressed in high levels in the prostate and many other androgen-sensitive tissues.

It is found in the microsome membrane. The protein resides in the endoplasmic reticulum membrane. The catalysed reaction is a 3-oxo-5alpha-steroid + NADP(+) = a 3-oxo-Delta(4)-steroid + NADPH + H(+). It catalyses the reaction 17beta-hydroxy-5alpha-androstan-3-one + NADP(+) = testosterone + NADPH + H(+). It carries out the reaction 5alpha-pregnane-3,20-dione + NADP(+) = progesterone + NADPH + H(+). In terms of biological role, converts testosterone (T) into 5-alpha-dihydrotestosterone (DHT) and progesterone or corticosterone into their corresponding 5-alpha-3-oxosteroids. It plays a central role in sexual differentiation and androgen physiology. This is 3-oxo-5-alpha-steroid 4-dehydrogenase 2 (SRD5A2) from Homo sapiens (Human).